Reading from the N-terminus, the 511-residue chain is Pancreatic alpha-amylase (511 aa).

The first 15 residues, 1–15 (MKFFLLLFTIGFCWA), serve as a signal peptide directing secretion. Gln16 is subject to Pyrrolidone carboxylic acid. Disulfide bonds link Cys43-Cys101, Cys85-Cys130, and Cys156-Cys175. Residues Asn115, Arg173, and Asp182 each coordinate Ca(2+). Arg210 contributes to the chloride binding site. The active-site Nucleophile is the Asp212. His216 contributes to the Ca(2+) binding site. Glu248 acts as the Proton donor in catalysis. Residues Asn313 and Arg352 each contribute to the chloride site. Cystine bridges form between Cys393–Cys399 and Cys465–Cys477. An N-linked (GlcNAc...) asparagine glycan is attached at Asn476.

The protein belongs to the glycosyl hydrolase 13 family. As to quaternary structure, monomer. Binds to the sea anemone inhibitor helianthamide. The cofactor is Ca(2+). Chloride serves as cofactor. Detected in pancreas (at protein level).

It localises to the secreted. It is found in the extracellular space. The catalysed reaction is Endohydrolysis of (1-&gt;4)-alpha-D-glucosidic linkages in polysaccharides containing three or more (1-&gt;4)-alpha-linked D-glucose units.. This is Pancreatic alpha-amylase (AMY2A) from Homo sapiens (Human).